The following is a 435-amino-acid chain: MQDSLTLNPIARVDGTLNLPGSKSVSNRALLLAAQANGTTRLTNLLDSDDVRHMLTALGQLGVNYRLSADRRSCEIDGLGGPLRADEALTLFLGNAGTAMRPLAAALCLQAQDVTLTGEPRMKERPIGHLVDALRQGGAQIDYLEHEHYPPLRLRGGYQGGDITVDGSVSSQFLTALLMMAPLAPQNSCIRIKGELVSRPYIDITLALMKSFGIEVRHDNYQVFYLTGGSVYRSPGEYLVEGDASSASYFLAAAAIRGGTVRVTGIGRHSVQGDIRFADVLESMGATIRWGNDYIECSRASLHTIDMDMNHIPDAAMTIATTALFASGGTTTLRNIANWRVKETDRLTAMATELRKVGATVIEGEDYLTVTPSARLSAARIGTYNDHRMAMCFALVALSDTPVTILDPQCTHKTFPDFFARLSALSTPASPHSAP.

3-phosphoshikimate contacts are provided by lysine 23, serine 24, and arginine 28. Lysine 23 provides a ligand contact to phosphoenolpyruvate. Residues glycine 97 and arginine 125 each contribute to the phosphoenolpyruvate site. 7 residues coordinate 3-phosphoshikimate: serine 170, serine 171, glutamine 172, serine 198, aspartate 314, asparagine 338, and lysine 342. Glutamine 172 contacts phosphoenolpyruvate. The active-site Proton acceptor is the aspartate 314. Phosphoenolpyruvate contacts are provided by arginine 346, arginine 388, and lysine 413.

This sequence belongs to the EPSP synthase family. In terms of assembly, monomer.

Its subcellular location is the cytoplasm. The enzyme catalyses 3-phosphoshikimate + phosphoenolpyruvate = 5-O-(1-carboxyvinyl)-3-phosphoshikimate + phosphate. It functions in the pathway metabolic intermediate biosynthesis; chorismate biosynthesis; chorismate from D-erythrose 4-phosphate and phosphoenolpyruvate: step 6/7. In terms of biological role, catalyzes the transfer of the enolpyruvyl moiety of phosphoenolpyruvate (PEP) to the 5-hydroxyl of shikimate-3-phosphate (S3P) to produce enolpyruvyl shikimate-3-phosphate and inorganic phosphate. This Sodalis glossinidius (strain morsitans) protein is 3-phosphoshikimate 1-carboxyvinyltransferase.